The following is a 429-amino-acid chain: Histidine--tRNA ligase (429 aa).

It belongs to the class-II aminoacyl-tRNA synthetase family. Homodimer.

The protein localises to the cytoplasm. The catalysed reaction is tRNA(His) + L-histidine + ATP = L-histidyl-tRNA(His) + AMP + diphosphate + H(+). This is Histidine--tRNA ligase from Alkalilimnicola ehrlichii (strain ATCC BAA-1101 / DSM 17681 / MLHE-1).